The following is a 392-amino-acid chain: Succinate--CoA ligase [ADP-forming] subunit beta (392 aa).

The ATP-grasp domain maps to 9–248 (KEILRGFGVT…TSEEDPLEVE (240 aa)). ATP is bound by residues Lys-50, 57–59 (GRG), Glu-103, Met-106, and Glu-111. The Mg(2+) site is built by Asn-203 and Asp-217. Residues Asn-268 and 325–327 (GIV) contribute to the substrate site.

It belongs to the succinate/malate CoA ligase beta subunit family. In terms of assembly, heterotetramer of two alpha and two beta subunits. It depends on Mg(2+) as a cofactor.

It catalyses the reaction succinate + ATP + CoA = succinyl-CoA + ADP + phosphate. The enzyme catalyses GTP + succinate + CoA = succinyl-CoA + GDP + phosphate. It participates in carbohydrate metabolism; tricarboxylic acid cycle; succinate from succinyl-CoA (ligase route): step 1/1. Functionally, succinyl-CoA synthetase functions in the citric acid cycle (TCA), coupling the hydrolysis of succinyl-CoA to the synthesis of either ATP or GTP and thus represents the only step of substrate-level phosphorylation in the TCA. The beta subunit provides nucleotide specificity of the enzyme and binds the substrate succinate, while the binding sites for coenzyme A and phosphate are found in the alpha subunit. This Chloroherpeton thalassium (strain ATCC 35110 / GB-78) protein is Succinate--CoA ligase [ADP-forming] subunit beta.